Reading from the N-terminus, the 185-residue chain is Ribosome-recycling factor (185 aa).

The interval lysine 141–glutamine 161 is disordered.

The protein belongs to the RRF family.

The protein resides in the cytoplasm. Functionally, responsible for the release of ribosomes from messenger RNA at the termination of protein biosynthesis. May increase the efficiency of translation by recycling ribosomes from one round of translation to another. This is Ribosome-recycling factor from Geotalea uraniireducens (strain Rf4) (Geobacter uraniireducens).